Here is a 152-residue protein sequence, read N- to C-terminus: Ribosome maturation factor RimP (152 aa).

This sequence belongs to the RimP family.

It is found in the cytoplasm. Required for maturation of 30S ribosomal subunits. This Stutzerimonas stutzeri (strain A1501) (Pseudomonas stutzeri) protein is Ribosome maturation factor RimP.